A 274-amino-acid chain; its full sequence is Cytochrome b-c1 complex subunit Rieske, mitochondrial (274 aa).

At 79-103 (SHTDVKVPDFYDYRRLEVLDSTKSS) the chain is on the mitochondrial matrix side. The helical transmembrane segment at 104–140 (RESSEARKGFSYLVTAVTTVGVAYAAKNAVTQFISSM) threads the bilayer. Residues 141 to 274 (SASADVLAMA…FTSDDMVVVG (134 aa)) lie on the Mitochondrial intermembrane side of the membrane. The Rieske domain occupies 187-272 (EAAVELSQLR…YEFTSDDMVV (86 aa)). [2Fe-2S] cluster-binding residues include Cys-217, His-219, Cys-236, His-239, and Ser-241. Cys-222 and Cys-238 are oxidised to a cystine.

This sequence belongs to the Rieske iron-sulfur protein family. In terms of assembly, component of the ubiquinol-cytochrome c oxidoreductase (cytochrome b-c1 complex, complex III, CIII), a multisubunit enzyme composed of 11 subunits. The complex is composed of 3 respiratory subunits cytochrome b, cytochrome c1 and Rieske protein UQCRFS1, 2 core protein subunits UQCRC1/QCR1 and UQCRC2/QCR2, and 6 low-molecular weight protein subunits UQCRH/QCR6, UQCRB/QCR7, UQCRQ/QCR8, UQCR10/QCR9, UQCR11/QCR10 and subunit 9, the cleavage product of Rieske protein UQCRFS1. The complex exists as an obligatory dimer and forms supercomplexes (SCs) in the inner mitochondrial membrane with NADH-ubiquinone oxidoreductase (complex I, CI) and cytochrome c oxidase (complex IV, CIV), resulting in different assemblies (supercomplex SCI(1)III(2)IV(1) and megacomplex MCI(2)III(2)IV(2)). Incorporation of the Rieske protein UQCRFS1 is the penultimate step in complex III assembly. Interacts with TTC19, which is involved in the clearance of UQCRFS1 fragments. As to quaternary structure, component of the ubiquinol-cytochrome c oxidoreductase (cytochrome b-c1 complex, complex III, CIII). Subunit 9 corresponds to the mitochondrial targeting sequence (MTS) of Rieske protein UQCRFS1. It is retained after processing and incorporated inside complex III, where it remains bound to the complex and localizes between the 2 core subunits UQCRC1/QCR1 and UQCRC2/QCR2. [2Fe-2S] cluster is required as a cofactor. In terms of processing, proteolytic processing is necessary for the correct insertion of UQCRFS1 in the complex III dimer. Several fragments are generated during UQCRFS1 insertion, most probably due to the endogenous matrix-processing peptidase (MPP) activity of the 2 core protein subunits UQCRC1/QCR1 and UQCRC2/QCR2, which are homologous to the 2 mitochondrial-processing peptidase (MPP) subunits beta-MPP and alpha-MPP respectively. The action of the protease is also necessary for the clearance of the UQCRFS1 fragments.

The protein resides in the mitochondrion inner membrane. The enzyme catalyses a quinol + 2 Fe(III)-[cytochrome c](out) = a quinone + 2 Fe(II)-[cytochrome c](out) + 2 H(+)(out). Component of the ubiquinol-cytochrome c oxidoreductase, a multisubunit transmembrane complex that is part of the mitochondrial electron transport chain which drives oxidative phosphorylation. The respiratory chain contains 3 multisubunit complexes succinate dehydrogenase (complex II, CII), ubiquinol-cytochrome c oxidoreductase (cytochrome b-c1 complex, complex III, CIII) and cytochrome c oxidase (complex IV, CIV), that cooperate to transfer electrons derived from NADH and succinate to molecular oxygen, creating an electrochemical gradient over the inner membrane that drives transmembrane transport and the ATP synthase. The cytochrome b-c1 complex catalyzes electron transfer from ubiquinol to cytochrome c, linking this redox reaction to translocation of protons across the mitochondrial inner membrane, with protons being carried across the membrane as hydrogens on the quinol. In the process called Q cycle, 2 protons are consumed from the matrix, 4 protons are released into the intermembrane space and 2 electrons are passed to cytochrome c. The Rieske protein is a catalytic core subunit containing a [2Fe-2S] iron-sulfur cluster. It cycles between 2 conformational states during catalysis to transfer electrons from the quinol bound in the Q(0) site in cytochrome b to cytochrome c1. Incorporation of UQCRFS1 is the penultimate step in complex III assembly. In terms of biological role, component of the ubiquinol-cytochrome c oxidoreductase (cytochrome b-c1 complex, complex III, CIII). UQCRFS1 undergoes proteolytic processing once it is incorporated in the complex III dimer. One of the fragments, called subunit 9, corresponds to its mitochondrial targeting sequence (MTS). The proteolytic processing is necessary for the correct insertion of UQCRFS1 in the complex III dimer, but the persistence of UQCRFS1-derived fragments may prevent newly imported UQCRFS1 to be processed and assembled into complex III and is detrimental for the complex III structure and function. In Theropithecus gelada (Gelada baboon), this protein is Cytochrome b-c1 complex subunit Rieske, mitochondrial (UQCRFS1).